Reading from the N-terminus, the 279-residue chain is MSVPTVLEKIVARKFEEVAARRVQVSLAELEAAARAADAPRGFARALLEQAARKQPAVIAEIKKASPSKGVLRADFVPADIARSYEAGGATCLSVLTDIDFFQGADEYLQQARAACALPVIRKDFMVDPYQIVEARALGADCVLLIVSCLDDVRMAELAAVAKDVGLDVLVEVHDGNELERALNTLDTPLVGINNRNLHTFEVSLETTLDLLPRIPRERLVVTESGILNRADVELMEISEVYAFLVGEAFMRAESPGAELQRLFFPERGRPTVVGKDPE.

The protein belongs to the TrpC family.

The enzyme catalyses 1-(2-carboxyphenylamino)-1-deoxy-D-ribulose 5-phosphate + H(+) = (1S,2R)-1-C-(indol-3-yl)glycerol 3-phosphate + CO2 + H2O. The protein operates within amino-acid biosynthesis; L-tryptophan biosynthesis; L-tryptophan from chorismate: step 4/5. In Ectopseudomonas mendocina (strain ymp) (Pseudomonas mendocina), this protein is Indole-3-glycerol phosphate synthase.